Reading from the N-terminus, the 485-residue chain is Cysteine protease atg4da (485 aa).

The tract at residues Ala22 to Pro46 is disordered. Cys131 serves as the catalytic Nucleophile. Catalysis depends on residues Asp368 and His370.

This sequence belongs to the peptidase C54 family.

The protein localises to the cytoplasm. The enzyme catalyses [protein]-C-terminal L-amino acid-glycyl-phosphatidylethanolamide + H2O = [protein]-C-terminal L-amino acid-glycine + a 1,2-diacyl-sn-glycero-3-phosphoethanolamine. It catalyses the reaction [protein]-C-terminal L-amino acid-glycyl-phosphatidylserine + H2O = [protein]-C-terminal L-amino acid-glycine + a 1,2-diacyl-sn-glycero-3-phospho-L-serine. Its function is as follows. Cysteine protease that plays a key role in autophagy by mediating both proteolytic activation and delipidation of ATG8 family proteins. The protease activity is required for proteolytic activation of ATG8 family proteins to reveal a C-terminal glycine. Exposure of the glycine at the C-terminus is essential for ATG8 proteins conjugation to phosphatidylethanolamine (PE) and insertion to membranes, which is necessary for autophagy. In addition to the protease activity, also mediates delipidation of ATG8 family proteins. Catalyzes delipidation of PE-conjugated forms of ATG8 proteins during macroautophagy. Also involved in non-canonical autophagy, a parallel pathway involving conjugation of ATG8 proteins to single membranes at endolysosomal compartments, by catalyzing delipidation of ATG8 proteins conjugated to phosphatidylserine (PS). ATG4D plays a role in the autophagy-mediated neuronal homeostasis in the central nervous system. This is Cysteine protease atg4da from Danio rerio (Zebrafish).